The sequence spans 390 residues: Pyruvate dehydrogenase E1 component subunit alpha, somatic form, mitochondrial (390 aa).

The transit peptide at 1–29 (MRKMLAAVSRVLSGASQKPASRVLVASRN) directs the protein to the mitochondrion. Lys-63 carries the post-translational modification N6-acetyllysine; alternate. N6-succinyllysine; alternate is present on Lys-63. Pyruvate contacts are provided by His-92, Tyr-118, Arg-119, Ala-157, Gly-165, Val-167, Asp-196, Gly-197, Ala-198, Asn-225, and Tyr-227. Thiamine diphosphate contacts are provided by Tyr-118 and Arg-119. Thiamine diphosphate is bound by residues Gly-165, Val-167, Asp-196, Gly-197, Ala-198, and Asn-225. Residue Asp-196 participates in Mg(2+) binding. Mg(2+)-binding residues include Asn-225 and Tyr-227. The residue at position 232 (Ser-232) is a Phosphoserine; by PDK1. N6-acetyllysine; alternate is present on Lys-244. Lys-244 bears the N6-succinyllysine; alternate mark. N6-succinyllysine is present on Lys-277. A thiamine diphosphate-binding site is contributed by His-292. Position 293 is a phosphoserine; by PDK1, PDK2, PDK3 and PDK4 (Ser-293). A Phosphoserine modification is found at Ser-295. The residue at position 300 (Ser-300) is a Phosphoserine; by PDK1, PDK2, PDK3 and PDK4. The residue at position 301 (Tyr-301) is a Phosphotyrosine. Lys-313 carries the post-translational modification N6-acetyllysine; alternate. Lys-313 carries the post-translational modification N6-succinyllysine; alternate. N6-acetyllysine is present on residues Lys-321 and Lys-336. Residue Lys-385 is modified to N6-succinyllysine.

Heterotetramer of two PDHA1 and two PDHB subunits. The heterotetramer interacts with DLAT, and is part of the multimeric pyruvate dehydrogenase complex that contains multiple copies of pyruvate dehydrogenase (E1), dihydrolipoamide acetyltransferase (DLAT, E2) and lipoamide dehydrogenase (DLD, E3). These subunits are bound to an inner core composed of about 48 DLAT and 12 PDHX molecules. Thiamine diphosphate serves as cofactor. Requires Mg(2+) as cofactor. Phosphorylation at Ser-232, Ser-293 and Ser-300 by PDK family kinases inactivates the enzyme; for this phosphorylation at a single site is sufficient. Dephosphorylation at all three sites, i.e. at Ser-232, Ser-293 and Ser-300, is required for reactivation. In terms of processing, acetylation alters the phosphorylation pattern. Deacetylated by SIRT3. Ubiquitous.

The protein resides in the mitochondrion matrix. It catalyses the reaction N(6)-[(R)-lipoyl]-L-lysyl-[protein] + pyruvate + H(+) = N(6)-[(R)-S(8)-acetyldihydrolipoyl]-L-lysyl-[protein] + CO2. Its activity is regulated as follows. Pyruvate dehydrogenase activity is inhibited by phosphorylation of PDHA1; it is reactivated by dephosphorylation. Functionally, the pyruvate dehydrogenase complex catalyzes the overall conversion of pyruvate to acetyl-CoA and CO(2), and thereby links the glycolytic pathway to the tricarboxylic cycle. The sequence is that of Pyruvate dehydrogenase E1 component subunit alpha, somatic form, mitochondrial (PDHA1) from Homo sapiens (Human).